The primary structure comprises 168 residues: uncharacterized protein (168 aa).

The PfpI endopeptidase domain occupies 1–166 (MRVLILAENE…FCGELIKILK (166 aa)).

The protein belongs to the peptidase C56 family.

This is an uncharacterized protein from Archaeoglobus fulgidus (strain ATCC 49558 / DSM 4304 / JCM 9628 / NBRC 100126 / VC-16).